The following is a 190-amino-acid chain: MSIKEDKWIREMALNADMIHPFVNGQVNVNEETGEKLISYGLSSYGYDLRLSREFKVFTNVYNSVVDPKCFTEDIFISITDDVCIVPPNSFALARSVEYFRIPRNVLTMCIGKSTYARCGIIVNVTPFEPEWEGHVTIEISNTTPLPAKIYANEGIAQVLFFESSTTCEVSYADRKGKYQKQQGITVPCV.

113–118 (KSTYAR) is a dCTP binding site. Glutamate 139 acts as the Proton donor/acceptor in catalysis. The dCTP site is built by glutamine 158, tyrosine 172, lysine 181, and glutamine 182.

It belongs to the dCTP deaminase family. Homotrimer.

The enzyme catalyses dCTP + H2O + H(+) = dUTP + NH4(+). It participates in pyrimidine metabolism; dUMP biosynthesis; dUMP from dCTP (dUTP route): step 1/2. Catalyzes the deamination of dCTP to dUTP. This chain is dCTP deaminase, found in Chlamydia pneumoniae (Chlamydophila pneumoniae).